The primary structure comprises 645 residues: Macrolide export ATP-binding/permease protein MacB (645 aa).

In terms of domain architecture, ABC transporter spans 6–244; sequence IELEGIRRSY…SSIAVVPWQA (239 aa). 42–49 serves as a coordination point for ATP; the sequence is GASGSGKS. 4 helical membrane passes run 274–294, 526–546, 574–594, and 596–616; these read ALTLSGIVIGVASVVAMMAIG, IAAISMLVGGIGIMNIMLITV, AVVLAAIGGVVGLLLGAVIGV, and AALLFGMTVIFSVTMALGALM.

The protein belongs to the ABC transporter superfamily. Macrolide exporter (TC 3.A.1.122) family. In terms of assembly, homodimer.

The protein resides in the cell inner membrane. Functionally, non-canonical ABC transporter that contains transmembrane domains (TMD), which form a pore in the inner membrane, and an ATP-binding domain (NBD), which is responsible for energy generation. Confers resistance against macrolides. This is Macrolide export ATP-binding/permease protein MacB from Nitrobacter winogradskyi (strain ATCC 25391 / DSM 10237 / CIP 104748 / NCIMB 11846 / Nb-255).